Here is a 237-residue protein sequence, read N- to C-terminus: Uridylate kinase (237 aa).

10–13 (KFSG) contributes to the ATP binding site. An involved in allosteric activation by GTP region spans residues 18–23 (GDSGFG). Residue glycine 52 coordinates UMP. ATP contacts are provided by glycine 53 and arginine 57. Residues aspartate 73 and 134–141 (TGNPFFTT) each bind UMP. ATP contacts are provided by threonine 161, tyrosine 167, and aspartate 170.

Belongs to the UMP kinase family. Homohexamer.

It localises to the cytoplasm. It catalyses the reaction UMP + ATP = UDP + ADP. Its pathway is pyrimidine metabolism; CTP biosynthesis via de novo pathway; UDP from UMP (UMPK route): step 1/1. Its activity is regulated as follows. Allosterically activated by GTP. Inhibited by UTP. Catalyzes the reversible phosphorylation of UMP to UDP. This chain is Uridylate kinase, found in Campylobacter hominis (strain ATCC BAA-381 / DSM 21671 / CCUG 45161 / LMG 19568 / NCTC 13146 / CH001A).